The sequence spans 224 residues: 4'-phosphopantetheinyl transferase (224 aa).

Residues D107, E109, and E151 each coordinate Mg(2+). Residues 158-189 (GKGLSLPLDSFSVRLKDDGHVSIELPDGHEPC) form a peptidyl carrier protein binding region.

It belongs to the P-Pant transferase superfamily. Gsp/Sfp/HetI/AcpT family. Mg(2+) is required as a cofactor.

It catalyses the reaction apo-[peptidyl-carrier protein] + CoA = holo-[peptidyl-carrier protein] + adenosine 3',5'-bisphosphate + H(+). May activate the peptidyl carrier protein (PCP) domains of surfactin synthetase SRF1/2/3 and iturin A synthetase, by transferring the 4'-phosphopantetheinyl moiety of coenzyme A (CoA) to a serine residue. Required for the coproduction of the lipopeptide antibiotics, iturin A and surfactin. This chain is 4'-phosphopantetheinyl transferase (lpa-14), found in Bacillus subtilis.